We begin with the raw amino-acid sequence, 635 residues long: Biosynthetic arginine decarboxylase (635 aa).

Lys100 is subject to N6-(pyridoxal phosphate)lysine. Residue 282 to 292 (VDIGGGLGVDY) coordinates substrate.

The protein belongs to the Orn/Lys/Arg decarboxylase class-II family. SpeA subfamily. It depends on Mg(2+) as a cofactor. The cofactor is pyridoxal 5'-phosphate.

The catalysed reaction is L-arginine + H(+) = agmatine + CO2. It participates in amine and polyamine biosynthesis; agmatine biosynthesis; agmatine from L-arginine: step 1/1. In terms of biological role, catalyzes the biosynthesis of agmatine from arginine. This chain is Biosynthetic arginine decarboxylase, found in Geobacter sulfurreducens (strain ATCC 51573 / DSM 12127 / PCA).